A 440-amino-acid polypeptide reads, in one-letter code: F-box protein pof12 (440 aa).

Residues 8-54 enclose the F-box domain; it reads KNPASIFSHETLLHVLNDLSAHDLAALERVSRSWNSIVRRSSVWHNL.

In terms of assembly, interacts with skp1.

The protein resides in the nucleus. In Schizosaccharomyces pombe (strain 972 / ATCC 24843) (Fission yeast), this protein is F-box protein pof12 (pof12).